The chain runs to 75 residues: Movement protein TGBp3 (75 aa).

The Lumenal portion of the chain corresponds to 1 to 2; sequence MR. A helical transmembrane segment spans residues 3-23; it reads VLDLILALITAAVVGYTIALV. Topologically, residues 24–75 are cytoplasmic; the sequence is SNSGCYVHFDGRSATTTCPPGPWVESIANGLYTAGLARPHPEPECERRQSSW.

Belongs to the Tymovirales TGBp3 protein family.

Its subcellular location is the host endoplasmic reticulum membrane. Functionally, plays a role in viral cell-to-cell propagation, by facilitating genome transport to neighboring plant cells through plasmosdesmata. May induce the formation of granular vesicles derived from the Endoplasmic reticulum, which align on actin filaments. This is Movement protein TGBp3 from Strawberry mild yellow edge-associated virus (SMYEaV).